Here is a 193-residue protein sequence, read N- to C-terminus: Dephospho-CoA kinase (193 aa).

The DPCK domain occupies I5–I193. ATP is bound at residue A13–T18.

It belongs to the CoaE family.

The protein localises to the cytoplasm. It carries out the reaction 3'-dephospho-CoA + ATP = ADP + CoA + H(+). Its pathway is cofactor biosynthesis; coenzyme A biosynthesis; CoA from (R)-pantothenate: step 5/5. In terms of biological role, catalyzes the phosphorylation of the 3'-hydroxyl group of dephosphocoenzyme A to form coenzyme A. This chain is Dephospho-CoA kinase, found in Fusobacterium nucleatum subsp. nucleatum (strain ATCC 25586 / DSM 15643 / BCRC 10681 / CIP 101130 / JCM 8532 / KCTC 2640 / LMG 13131 / VPI 4355).